The chain runs to 353 residues: Sorbitol dehydrogenase (353 aa).

Cys45 contributes to the Zn(2+) binding site. Tyr51 is a substrate binding site. Zn(2+) contacts are provided by His70 and Glu71. Glu156 is a substrate binding site. NAD(+)-binding positions include Val184, Asp204, Arg209, 271-273, and 296-298; these read VGL and IFR. Positions 298 and 299 each coordinate substrate.

Belongs to the zinc-containing alcohol dehydrogenase family. As to quaternary structure, homotetramer. Zn(2+) serves as cofactor.

It catalyses the reaction keto-D-fructose + NADH + H(+) = D-sorbitol + NAD(+). It carries out the reaction xylitol + NAD(+) = D-xylulose + NADH + H(+). The enzyme catalyses L-iditol + NAD(+) = keto-L-sorbose + NADH + H(+). Functionally, polyol dehydrogenase that catalyzes the NAD(+)-dependent oxidation of various sugar alcohols. Is mostly active with D-sorbitol (D-glucitol), xylitol and L-iditol as substrates, leading to the C2-oxidized products D-fructose, D-xylulose and L-sorbose, respectively. This Bacillus subtilis (strain 168) protein is Sorbitol dehydrogenase.